Consider the following 565-residue polypeptide: Arginine--tRNA ligase (565 aa).

Residues 126–136 (ANPTGPLHIGH) carry the 'HIGH' region motif.

The protein belongs to the class-I aminoacyl-tRNA synthetase family. In terms of assembly, monomer.

Its subcellular location is the cytoplasm. It catalyses the reaction tRNA(Arg) + L-arginine + ATP = L-arginyl-tRNA(Arg) + AMP + diphosphate. This Wolbachia sp. subsp. Brugia malayi (strain TRS) protein is Arginine--tRNA ligase.